A 492-amino-acid chain; its full sequence is Probable cobyric acid synthase (492 aa).

A GATase cobBQ-type domain is found at Pro-248–Ala-434. Cys-327 (nucleophile) is an active-site residue. The active site involves His-426.

The protein belongs to the CobB/CobQ family. CobQ subfamily.

It functions in the pathway cofactor biosynthesis; adenosylcobalamin biosynthesis. Its function is as follows. Catalyzes amidations at positions B, D, E, and G on adenosylcobyrinic A,C-diamide. NH(2) groups are provided by glutamine, and one molecule of ATP is hydrogenolyzed for each amidation. This Methanoculleus marisnigri (strain ATCC 35101 / DSM 1498 / JR1) protein is Probable cobyric acid synthase.